Consider the following 115-residue polypeptide: Transcription and mRNA export factor ENY2 (115 aa).

Belongs to the ENY2 family. As to quaternary structure, component of a deubiquitination module (DUB module) formed by ENY2, SGF11, and UBP22 in Arabidopsis. Interacts directly with SGF11, but not with UBP22. Interacts with MOS4. In terms of tissue distribution, expressed in roots, cotyledons, leaves and upper part of sepals.

It is found in the nucleus. It localises to the nucleoplasm. Its function is as follows. Component of a deubiquitination module (DUB module) that specifically deubiquinates monoubiquinated histone H2B (H2Bub). Does not seem to be a component of the TREX-2 complex. Seems to act independently of the SAGA multiprotein complex. The DUB module is responsible for the major H2Bub deubiquitinase activity in Arabidopsis. The sequence is that of Transcription and mRNA export factor ENY2 from Arabidopsis thaliana (Mouse-ear cress).